A 261-amino-acid polypeptide reads, in one-letter code: uncharacterized protein (261 aa).

The first 22 residues, 1–22, serve as a signal peptide directing secretion; the sequence is MRYLKKVTIYISLLILTIFIGG. Cys23 carries the N-palmitoyl cysteine lipid modification. Cys23 carries the S-diacylglycerol cysteine lipid modification.

The protein belongs to the staphylococcal tandem lipoprotein family.

Its subcellular location is the cell membrane. This is an uncharacterized protein from Staphylococcus epidermidis (strain ATCC 35984 / DSM 28319 / BCRC 17069 / CCUG 31568 / BM 3577 / RP62A).